Reading from the N-terminus, the 257-residue chain is ATP synthase subunit a (257 aa).

A run of 6 helical transmembrane segments spans residues 34–54, 93–113, 122–142, 149–169, 187–207, and 210–230; these read ITNIGLYMTIAAFIAFYFSIL, YFPFMYTLFIFILINNLIGMV, HFILTFSLSFTVVLGATVLGF, FFSLFVPAGCPLGLLPLLVLI, ANILSGHMLLNILSGFTYNIM, and GIIFFILGLLPLAFIIAFSGL.

It belongs to the ATPase A chain family. F-type ATPases have 2 components, CF(1) - the catalytic core - and CF(0) - the membrane proton channel. CF(1) has five subunits: alpha(3), beta(3), gamma(1), delta(1), epsilon(1). CF(0) has three main subunits: a, b and c.

The protein localises to the mitochondrion inner membrane. In terms of biological role, mitochondrial membrane ATP synthase (F(1)F(0) ATP synthase or Complex V) produces ATP from ADP in the presence of a proton gradient across the membrane which is generated by electron transport complexes of the respiratory chain. F-type ATPases consist of two structural domains, F(1) - containing the extramembraneous catalytic core and F(0) - containing the membrane proton channel, linked together by a central stalk and a peripheral stalk. During catalysis, ATP synthesis in the catalytic domain of F(1) is coupled via a rotary mechanism of the central stalk subunits to proton translocation. Key component of the proton channel; it may play a direct role in the translocation of protons across the membrane. The chain is ATP synthase subunit a (ATP6) from Cochliobolus heterostrophus (Southern corn leaf blight fungus).